The following is a 139-amino-acid chain: uncharacterized protein (139 aa).

This is an uncharacterized protein from Saccharomyces cerevisiae (strain ATCC 204508 / S288c) (Baker's yeast).